Reading from the N-terminus, the 337-residue chain is Heme A synthase (337 aa).

Transmembrane regions (helical) follow at residues 6-26 (ITKWLFISCIMVIAMIVIGGI), 93-113 (GRITALIYIVPLIYFYFKDVI), 118-138 (ILPYIIALLLFCVQGFMGWYM), 154-174 (LAFHLIIAVIIYHILFYQLIK), and 192-212 (LIFSGIAITVIYVQIFLGAMV). His256 is a binding site for heme. A run of 3 helical transmembrane segments spans residues 258–278 (LGGYSVFLVVVVLVICLLKIE), 285–305 (IAYFLMIALLMQISTGIITLL), and 308–328 (VPIIIASIHQLFAIILLSIII). His316 is a heme binding site.

The protein belongs to the COX15/CtaA family. Type 2 subfamily. Interacts with CtaB. It depends on heme b as a cofactor.

Its subcellular location is the cell membrane. It carries out the reaction Fe(II)-heme o + 2 A + H2O = Fe(II)-heme a + 2 AH2. It participates in porphyrin-containing compound metabolism; heme A biosynthesis; heme A from heme O: step 1/1. Catalyzes the conversion of heme O to heme A by two successive hydroxylations of the methyl group at C8. The first hydroxylation forms heme I, the second hydroxylation results in an unstable dihydroxymethyl group, which spontaneously dehydrates, resulting in the formyl group of heme A. This is Heme A synthase from Rickettsia felis (strain ATCC VR-1525 / URRWXCal2) (Rickettsia azadi).